A 518-amino-acid chain; its full sequence is Protein nucleotidyltransferase YdiU (518 aa).

Positions 100, 102, 103, 123, 135, 136, 193, and 200 each coordinate ATP. The active-site Proton acceptor is aspartate 270. Residues asparagine 271 and aspartate 280 each contribute to the Mg(2+) site. Aspartate 280 is an ATP binding site.

The protein belongs to the SELO family. Mg(2+) serves as cofactor. The cofactor is Mn(2+).

The catalysed reaction is L-seryl-[protein] + ATP = 3-O-(5'-adenylyl)-L-seryl-[protein] + diphosphate. It catalyses the reaction L-threonyl-[protein] + ATP = 3-O-(5'-adenylyl)-L-threonyl-[protein] + diphosphate. It carries out the reaction L-tyrosyl-[protein] + ATP = O-(5'-adenylyl)-L-tyrosyl-[protein] + diphosphate. The enzyme catalyses L-histidyl-[protein] + UTP = N(tele)-(5'-uridylyl)-L-histidyl-[protein] + diphosphate. The catalysed reaction is L-seryl-[protein] + UTP = O-(5'-uridylyl)-L-seryl-[protein] + diphosphate. It catalyses the reaction L-tyrosyl-[protein] + UTP = O-(5'-uridylyl)-L-tyrosyl-[protein] + diphosphate. In terms of biological role, nucleotidyltransferase involved in the post-translational modification of proteins. It can catalyze the addition of adenosine monophosphate (AMP) or uridine monophosphate (UMP) to a protein, resulting in modifications known as AMPylation and UMPylation. The chain is Protein nucleotidyltransferase YdiU from Xanthomonas oryzae pv. oryzae (strain MAFF 311018).